Reading from the N-terminus, the 508-residue chain is Beta-glucosidase 10 (508 aa).

A signal peptide spans 1 to 22; it reads MKLYSLLSVFLVILLATSDSDA. Residues glutamine 42, histidine 142, and 187 to 188 contribute to the a beta-D-glucoside site; that span reads NE. Glutamate 188 functions as the Proton donor in the catalytic mechanism. An intrachain disulfide couples cysteine 207 to cysteine 215. 2 N-linked (GlcNAc...) asparagine glycosylation sites follow: asparagine 214 and asparagine 219. Tyrosine 331 serves as a coordination point for a beta-D-glucoside. N-linked (GlcNAc...) asparagine glycosylation occurs at asparagine 365. Glutamate 398 contacts a beta-D-glucoside. The active-site Nucleophile is glutamate 398. Residue asparagine 431 is glycosylated (N-linked (GlcNAc...) asparagine). Residues tryptophan 441 and phenylalanine 457 each coordinate a beta-D-glucoside. N-linked (GlcNAc...) asparagine glycans are attached at residues asparagine 463, asparagine 485, and asparagine 501.

Belongs to the glycosyl hydrolase 1 family.

The catalysed reaction is Hydrolysis of terminal, non-reducing beta-D-glucosyl residues with release of beta-D-glucose.. This is Beta-glucosidase 10 from Arabidopsis thaliana (Mouse-ear cress).